We begin with the raw amino-acid sequence, 327 residues long: Phospho-N-acetylmuramoyl-pentapeptide-transferase (327 aa).

The next 10 membrane-spanning stretches (helical) occupy residues 3-23 (TAII…PAFI), 51-71 (TMGG…IALF), 79-99 (VTTI…DDFL), 115-135 (LFLQ…HGGG), 140-160 (VFGF…FWLV), 172-192 (IDGL…VIAL), 197-217 (FDLL…FGFN), 223-243 (IFMG…LSIA), 248-268 (WTLL…MLQV), and 306-326 (VDFL…AILY).

The protein belongs to the glycosyltransferase 4 family. MraY subfamily. It depends on Mg(2+) as a cofactor.

The protein localises to the cell membrane. It carries out the reaction UDP-N-acetyl-alpha-D-muramoyl-L-alanyl-gamma-D-glutamyl-L-lysyl-D-alanyl-D-alanine + di-trans,octa-cis-undecaprenyl phosphate = Mur2Ac(oyl-L-Ala-gamma-D-Glu-L-Lys-D-Ala-D-Ala)-di-trans,octa-cis-undecaprenyl diphosphate + UMP. It functions in the pathway cell wall biogenesis; peptidoglycan biosynthesis. Catalyzes the initial step of the lipid cycle reactions in the biosynthesis of the cell wall peptidoglycan: transfers peptidoglycan precursor phospho-MurNAc-pentapeptide from UDP-MurNAc-pentapeptide onto the lipid carrier undecaprenyl phosphate, yielding undecaprenyl-pyrophosphoryl-MurNAc-pentapeptide, known as lipid I. In Streptococcus gordonii (strain Challis / ATCC 35105 / BCRC 15272 / CH1 / DL1 / V288), this protein is Phospho-N-acetylmuramoyl-pentapeptide-transferase.